Consider the following 299-residue polypeptide: Ribosomal protein L11 methyltransferase (299 aa).

Residues threonine 149, glycine 170, aspartate 192, and asparagine 234 each coordinate S-adenosyl-L-methionine.

The protein belongs to the methyltransferase superfamily. PrmA family.

It localises to the cytoplasm. It carries out the reaction L-lysyl-[protein] + 3 S-adenosyl-L-methionine = N(6),N(6),N(6)-trimethyl-L-lysyl-[protein] + 3 S-adenosyl-L-homocysteine + 3 H(+). In terms of biological role, methylates ribosomal protein L11. The protein is Ribosomal protein L11 methyltransferase of Chromohalobacter salexigens (strain ATCC BAA-138 / DSM 3043 / CIP 106854 / NCIMB 13768 / 1H11).